Consider the following 587-residue polypeptide: uncharacterized protein (587 aa).

Residues 61-426 (GKGASKKAAL…DLPNWHHDAE (366 aa)) enclose the YcaO domain.

This is an uncharacterized protein from Haemophilus influenzae (strain ATCC 51907 / DSM 11121 / KW20 / Rd).